The following is a 414-amino-acid chain: MVSTISRQDQNNNDDLNQPSKEGRFGKYGGQYVPETLMPALFELEEAASDAWKDKQFVNELNHLLKTYVGRETPLYEAKRLTEHYQTKTSTSRIWLKREDLNHTGAHKINNALGQALLAIRMGKQRIIAETGAGQHGVATATVCARFGLQCIIYMGAEDIKRQSLNVFRMKLLGAEVKVVTSGTATLKDATSEAIRDWVSNVETTHYILGSVAGPHPFPMIVRDFHAVIGEEAKKQCLESFGSLPDILLACVGGGSNAMGLFHPFVKEKSVRLIGVEAAGSGVNTEKHAATITKGSVGILHGSMSLLLQDKDGQVQEAHSISAGLDYPGVGPEHSYLKDIGRAEYGSVTDAEALDALKLVSELEGIIPALETAHAFAWLEKLCPTLDKDTEIVINCSGRGDKDVNTVASSLNID.

The segment at methionine 1–tyrosine 28 is disordered. The segment covering glutamine 8–glutamine 18 has biased composition (low complexity). At lysine 108 the chain carries N6-(pyridoxal phosphate)lysine.

It belongs to the TrpB family. In terms of assembly, tetramer of two alpha and two beta chains. The cofactor is pyridoxal 5'-phosphate.

It carries out the reaction (1S,2R)-1-C-(indol-3-yl)glycerol 3-phosphate + L-serine = D-glyceraldehyde 3-phosphate + L-tryptophan + H2O. The protein operates within amino-acid biosynthesis; L-tryptophan biosynthesis; L-tryptophan from chorismate: step 5/5. The beta subunit is responsible for the synthesis of L-tryptophan from indole and L-serine. In Prochlorococcus marinus subsp. pastoris (strain CCMP1986 / NIES-2087 / MED4), this protein is Tryptophan synthase beta chain.